We begin with the raw amino-acid sequence, 259 residues long: Short-chain dehydrogenase chry4 (259 aa).

Positions 37, 55, 81, 154, 158, 185, and 187 each coordinate NADP(+). Y154 (proton donor) is an active-site residue. K158 functions as the Lowers pKa of active site Tyr in the catalytic mechanism.

It belongs to the short-chain dehydrogenases/reductases (SDR) family.

The protein operates within pigment biosynthesis. Its function is as follows. Short-chain dehydrogenase; part of the gene cluster that mediates the biosynthesis of the yellow pigment chrysogine. Pyruvic acid and anthranilic acid are likely substrates for the nonribosomal peptide synthetase chry1/NRPS14, with pyruvic acid adenylated by the first A domain and anthranilic acid by the second. If pyruvic acid and anthranilic acid are merged and released from chry1/NRPS14 by hydrolysis, a subsequent amidation would lead to 2-pyruvoylaminobenzamide. This process is probably catalyzed by the amidotransferase chry2 using glutamine as amino donor. The dehydrogenase chry5 that has a terminal berberine bridge domain for C-N cyclization could catalyze the cyclization of 2-pyruvoylaminobenzamide to yield acetyl-4(3H)-quinazolidinone. A final reduction of acetyl-4(3H)-quinazolidinone catalyzed by the oxidoreductase chry4 would result in chrysogine. The polypeptide is Short-chain dehydrogenase chry4 (Gibberella zeae (strain ATCC MYA-4620 / CBS 123657 / FGSC 9075 / NRRL 31084 / PH-1) (Wheat head blight fungus)).